The sequence spans 293 residues: Ankyrin repeat and SOCS box protein 11 (293 aa).

ANK repeat units follow at residues 36–65 (DDRT…NVGM), 69–98 (DGIT…DANA), 102–131 (DGAT…AHHP), 134–163 (LLCS…NVDM), 167–196 (SVGT…DVQC), 199–228 (GLDT…DRTS), and 232–259 (EGKT…SLSQ). Residues 244-293 (SIKHLLQTAGTCSLSQLCRWCIRRSLGQKGLNKTKTLCLPHMLHNYLLYH) enclose the SOCS box domain.

The protein belongs to the ankyrin SOCS box (ASB) family. In terms of assembly, substrate-recognition component of the ECS(ASB11) complex, composed of asb11, cul5, elob, eloc and rnf7/rbx2. In terms of tissue distribution, expressed in the developing nervous system: localizes to neural plate margins and is abutting the proneuronal zone.

It localises to the endoplasmic reticulum. It functions in the pathway protein modification; protein ubiquitination. Substrate-recognition component of a cullin-5-RING E3 ubiquitin-protein ligase complex (ECS complex, also named CRL5 complex), which mediates the ubiquitination and subsequent proteasomal degradation of target proteins. Acts as a regulator of the neuronal progenitor compartment size by maintaining the neural precursors in the proliferating undifferentiated state. The ECS(ASB11) complex acts as a positive regulator of Notch signaling pathway by mediating ubiquitination and degradation of DeltaA (dla). Also acts as a regulator of regenerative myogenesis. The polypeptide is Ankyrin repeat and SOCS box protein 11 (Danio rerio (Zebrafish)).